The following is a 517-amino-acid chain: Putative ribose/galactose/methyl galactoside import ATP-binding protein 1 (517 aa).

2 ABC transporter domains span residues 23 to 258 (LQLQ…VGRP) and 269 to 515 (TPTD…SGRS). 55–62 (GENGAGKS) is an ATP binding site.

Belongs to the ABC transporter superfamily. Carbohydrate importer 2 (CUT2) (TC 3.A.1.2) family.

The protein localises to the cell inner membrane. The catalysed reaction is D-ribose(out) + ATP + H2O = D-ribose(in) + ADP + phosphate + H(+). It carries out the reaction D-galactose(out) + ATP + H2O = D-galactose(in) + ADP + phosphate + H(+). Part of an ABC transporter complex involved in carbohydrate import. Could be involved in ribose, galactose and/or methyl galactoside import. Responsible for energy coupling to the transport system. This Burkholderia ambifaria (strain ATCC BAA-244 / DSM 16087 / CCUG 44356 / LMG 19182 / AMMD) (Burkholderia cepacia (strain AMMD)) protein is Putative ribose/galactose/methyl galactoside import ATP-binding protein 1.